Here is a 265-residue protein sequence, read N- to C-terminus: 4-hydroxy-tetrahydrodipicolinate reductase (265 aa).

Residues 7–12 (GASGRM) and aspartate 33 each bind NAD(+). Arginine 34 lines the NADP(+) pocket. NAD(+) is bound by residues 96-98 (GTT) and 120-123 (AANM). Catalysis depends on histidine 153, which acts as the Proton donor/acceptor. (S)-2,3,4,5-tetrahydrodipicolinate is bound at residue histidine 154. The Proton donor role is filled by lysine 157. Position 163–164 (163–164 (GT)) interacts with (S)-2,3,4,5-tetrahydrodipicolinate.

This sequence belongs to the DapB family.

The protein localises to the cytoplasm. It carries out the reaction (S)-2,3,4,5-tetrahydrodipicolinate + NAD(+) + H2O = (2S,4S)-4-hydroxy-2,3,4,5-tetrahydrodipicolinate + NADH + H(+). The catalysed reaction is (S)-2,3,4,5-tetrahydrodipicolinate + NADP(+) + H2O = (2S,4S)-4-hydroxy-2,3,4,5-tetrahydrodipicolinate + NADPH + H(+). The protein operates within amino-acid biosynthesis; L-lysine biosynthesis via DAP pathway; (S)-tetrahydrodipicolinate from L-aspartate: step 4/4. Catalyzes the conversion of 4-hydroxy-tetrahydrodipicolinate (HTPA) to tetrahydrodipicolinate. The chain is 4-hydroxy-tetrahydrodipicolinate reductase from Burkholderia orbicola (strain AU 1054).